Here is a 465-residue protein sequence, read N- to C-terminus: Muscarinic acetylcholine receptor M2 (465 aa).

At 1–21 the chain is on the extracellular side; that stretch reads MNNSTNSSNNVALTSPYKTFE. Residues N2, N3, and N6 are each glycosylated (N-linked (GlcNAc...) asparagine). The chain crosses the membrane as a helical span at residues 22–44; sequence VVFIVLVAGSLSLVTIIGNILVM. Over 45–58 the chain is Cytoplasmic; the sequence is VSIKVNRHLQTVNN. The helical transmembrane segment at 59–79 threads the bilayer; sequence YFLFSLACADLIIGVFSMNLY. Topologically, residues 80 to 96 are extracellular; it reads TLYTVIGYWPLGPVVCD. A disulfide bridge connects residues C95 and C175. A helical membrane pass occupies residues 97 to 118; sequence LWLALDYVVSNASVMNLLIISF. Residues 119-121 carry the Important for signaling motif; sequence DRY. Residues 119-138 are Cytoplasmic-facing; it reads DRYFCVTKPLTYPVKRTTKM. Residues 139-161 form a helical membrane-spanning segment; that stretch reads AGMMIAAAWVLSFILWAPAILFW. At 162 to 183 the chain is on the extracellular side; the sequence is QFIVGVRTVEDGECYIQFFSNA. A helical transmembrane segment spans residues 184 to 208; that stretch reads AVTFGTAIAAFYLPVIIMTVLYWHI. The Cytoplasmic segment spans residues 209-386; it reads SRASKSRIKK…PPSREKKVTR (178 aa). A disordered region spans residues 217 to 319; that stretch reads KKDKKEPVAN…SVGHSKDENS (103 aa). At S231 the chain carries Phosphoserine. A compositionally biased stretch (basic and acidic residues) spans 253 to 269; sequence GLEHNKIQNGKTPRDAV. 2 stretches are compositionally biased toward polar residues: residues 283–292 and 303–312; these read NDSTSVSAVA and DENTVSTSVG. Residues 387–409 traverse the membrane as a helical segment; that stretch reads TILAILLAFIITWAPYNVMVLIN. Residues 410 to 417 are Extracellular-facing; sequence TFCAPCIP. Residues C412 and C415 are joined by a disulfide bond. Residues 418 to 441 traverse the membrane as a helical segment; sequence NTVWTIGYWLCYINSTINPACYAL. The Important for signaling motif lies at 435 to 439; sequence NPACY. The Cytoplasmic portion of the chain corresponds to 442 to 465; sequence CNATFKKTFKHLLMCHYKNIGATR. T445, T449, and T464 each carry phosphothreonine.

Belongs to the G-protein coupled receptor 1 family. Muscarinic acetylcholine receptor subfamily. CHRM2 sub-subfamily. As to quaternary structure, interacts with ARRB1 and ARRB2. Interacts with RACK1; the interaction regulates CHRM2 internalization. Phosphorylated in response to agonist treatment.

Its subcellular location is the cell membrane. The protein localises to the postsynaptic cell membrane. Its function is as follows. The muscarinic acetylcholine receptor mediates various cellular responses, including inhibition of adenylate cyclase, breakdown of phosphoinositides and modulation of potassium channels through the action of G proteins. Primary transducing effect is adenylate cyclase inhibition. Signaling promotes phospholipase C activity, leading to the release of inositol trisphosphate (IP3); this then triggers calcium ion release into the cytosol. The chain is Muscarinic acetylcholine receptor M2 (CHRM2) from Bos taurus (Bovine).